We begin with the raw amino-acid sequence, 568 residues long: Cytochrome P450 monooxygenase 41 (568 aa).

Residues 21–41 (LTSLVPLILSVMVCLIATVTI) form a helical membrane-spanning segment. N-linked (GlcNAc...) asparagine glycosylation is found at Asn-321 and Asn-377. Position 514 (Cys-514) interacts with heme.

Belongs to the cytochrome P450 family. Heme is required as a cofactor.

The protein resides in the membrane. The protein operates within secondary metabolite biosynthesis. Functionally, cytochrome P450 monooxygenase that is able to use 3,5-dimethoxy-trans-stilbene and 3,5,4'-trimethoxy-trans-stilbene as substrates for oxidation. The sequence is that of Cytochrome P450 monooxygenase 41 from Postia placenta (strain ATCC 44394 / Madison 698-R) (Brown rot fungus).